A 174-amino-acid polypeptide reads, in one-letter code: ATP synthase subunit b (174 aa).

A helical transmembrane segment spans residues 9–29; it reads LPNTSLIFWEVVTFLILLALL.

Belongs to the ATPase B chain family. As to quaternary structure, F-type ATPases have 2 components, F(1) - the catalytic core - and F(0) - the membrane proton channel. F(1) has five subunits: alpha(3), beta(3), gamma(1), delta(1), epsilon(1). F(0) has three main subunits: a(1), b(2) and c(10-14). The alpha and beta chains form an alternating ring which encloses part of the gamma chain. F(1) is attached to F(0) by a central stalk formed by the gamma and epsilon chains, while a peripheral stalk is formed by the delta and b chains.

Its subcellular location is the cell membrane. F(1)F(0) ATP synthase produces ATP from ADP in the presence of a proton or sodium gradient. F-type ATPases consist of two structural domains, F(1) containing the extramembraneous catalytic core and F(0) containing the membrane proton channel, linked together by a central stalk and a peripheral stalk. During catalysis, ATP synthesis in the catalytic domain of F(1) is coupled via a rotary mechanism of the central stalk subunits to proton translocation. In terms of biological role, component of the F(0) channel, it forms part of the peripheral stalk, linking F(1) to F(0). This chain is ATP synthase subunit b, found in Rubrobacter xylanophilus (strain DSM 9941 / JCM 11954 / NBRC 16129 / PRD-1).